Reading from the N-terminus, the 217-residue chain is uncharacterized protein (217 aa).

This is an uncharacterized protein from Acidianus sp. F28 (AFV-2).